The following is a 367-amino-acid chain: Flagellar P-ring protein (367 aa).

Residues 1 to 21 (MKIIQTFFIITLLWLSQGVQA) form the signal peptide.

The protein belongs to the FlgI family. As to quaternary structure, the basal body constitutes a major portion of the flagellar organelle and consists of four rings (L,P,S, and M) mounted on a central rod.

It is found in the periplasm. Its subcellular location is the bacterial flagellum basal body. Assembles around the rod to form the L-ring and probably protects the motor/basal body from shearing forces during rotation. This Nitrosococcus oceani (strain ATCC 19707 / BCRC 17464 / JCM 30415 / NCIMB 11848 / C-107) protein is Flagellar P-ring protein.